Here is a 199-residue protein sequence, read N- to C-terminus: Ribonuclease HII (199 aa).

One can recognise an RNase H type-2 domain in the interval 10–199 (HLVAGVDEVG…VKRALGLASN (190 aa)). Residues D16, E17, and D108 each contribute to the a divalent metal cation site.

The protein belongs to the RNase HII family. Mn(2+) serves as cofactor. Requires Mg(2+) as cofactor.

The protein localises to the cytoplasm. It carries out the reaction Endonucleolytic cleavage to 5'-phosphomonoester.. Endonuclease that specifically degrades the RNA of RNA-DNA hybrids. The polypeptide is Ribonuclease HII (Klebsiella pneumoniae (strain 342)).